The following is a 138-amino-acid chain: Large-conductance mechanosensitive channel (138 aa).

A run of 3 helical transmembrane segments spans residues Val19–Ile39, Met40–Ser60, and Gly81–Ile101.

This sequence belongs to the MscL family. As to quaternary structure, homopentamer.

It localises to the cell inner membrane. Channel that opens in response to stretch forces in the membrane lipid bilayer. May participate in the regulation of osmotic pressure changes within the cell. The protein is Large-conductance mechanosensitive channel of Afipia carboxidovorans (strain ATCC 49405 / DSM 1227 / KCTC 32145 / OM5) (Oligotropha carboxidovorans).